The sequence spans 458 residues: Serine protease Do-like HtrB (458 aa).

Basic and acidic residues predominate over residues 1–18 (MDYRRDGQNDQHQTEPSH). The segment at 1–42 (MDYRRDGQNDQHQTEPSHTEQQNTENQKLIGHSEQELLDAPV) is disordered. At 1–71 (MDYRRDGQND…TAVKKEKKRR (71 aa)) the chain is on the cytoplasmic side. The helical transmembrane segment at 72–92 (AAWLSPILGGIIGGGLMLGIA) threads the bilayer. At 93–458 (PYLPSDQNQA…LTKQTESSSS (366 aa)) the chain is on the extracellular side. A disordered region spans residues 146–170 (QTSQNNTFGTGGGSSSESESGTGSG). Active-site charge relay system residues include His187, Asp217, and Ser298. Substrate-binding positions include 296 to 298 (GNS) and 352 to 356 (LGVQM). Residues 356 to 440 (MIDMSQVPET…KTTIQVLRKG (85 aa)) enclose the PDZ domain.

This sequence belongs to the peptidase S1C family.

It localises to the cell membrane. It catalyses the reaction Acts on substrates that are at least partially unfolded. The cleavage site P1 residue is normally between a pair of hydrophobic residues, such as Val-|-Val.. Functionally, degrades abnormal exported proteins and responsible for the propeptide processing of a natural pro-protein and for the maturation of a native protein. It also plays a prominent role in stress (heat shock, ethanol, puromycin and NaCl) resistance during active exponential growth. The chain is Serine protease Do-like HtrB (htrB) from Bacillus subtilis (strain 168).